The following is a 479-amino-acid chain: 6-phosphogluconate dehydrogenase, decarboxylating (479 aa).

Residues Gly-10–Gly-15, Asn-33–Ser-35, Ile-75–Ala-77, and Asn-103 each bind NADP(+). Substrate is bound by residues Asn-103 and Ser-129–Gly-131. The active-site Proton acceptor is the Lys-183. His-186–Asn-187 is a binding site for substrate. Glu-190 functions as the Proton donor in the catalytic mechanism. Substrate contacts are provided by Tyr-191, Lys-260, Arg-287, Arg-447, and His-453.

It belongs to the 6-phosphogluconate dehydrogenase family. Homodimer.

The enzyme catalyses 6-phospho-D-gluconate + NADP(+) = D-ribulose 5-phosphate + CO2 + NADPH. Its pathway is carbohydrate degradation; pentose phosphate pathway; D-ribulose 5-phosphate from D-glucose 6-phosphate (oxidative stage): step 3/3. Functionally, catalyzes the oxidative decarboxylation of 6-phosphogluconate to ribulose 5-phosphate and CO(2), with concomitant reduction of NADP to NADPH. The polypeptide is 6-phosphogluconate dehydrogenase, decarboxylating (gnd) (Chlamydia muridarum (strain MoPn / Nigg)).